We begin with the raw amino-acid sequence, 414 residues long: Putative truncated GMC-type inactive oxidoreductase R832 (414 aa).

Positions 1–20 (MNPTKLFLVFVAFAFAIINA) are cleaved as a signal peptide. Position 38–67 (38–67 (DYIIVGSGPGGSRAVQQCIAKGHKCTLVER)) interacts with FAD.

The protein belongs to the GMC oxidoreductase family. FAD serves as cofactor.

This chain is Putative truncated GMC-type inactive oxidoreductase R832, found in Acanthamoeba polyphaga (Amoeba).